Consider the following 225-residue polypeptide: MQIRWYGHAAFMVETGGAKLLIDPWITNPLSPASPQEVINAKPTHILITHDHFDHLGESVDIAKATGAPIVGSFELMLEVAEKGIPEAQTMPMNIGGTIKLGDGVEVYMTPALHTANRGAPSGFVVATPEGTVYHAGDTALFRDMELIGELYDIDVALLPIGSVYTMGPREAAIAVQLLRPRRVVPMHYNTFPLIRQDPEDFKARVEAVSRAKVFVMKPGDVLKL.

This sequence belongs to the UPF0173 family.

In Pyrobaculum arsenaticum (strain DSM 13514 / JCM 11321 / PZ6), this protein is UPF0173 metal-dependent hydrolase Pars_0810.